A 159-amino-acid chain; its full sequence is ATP synthase subunit b (159 aa).

Residues 2-22 (NISIPQIIAAILNFIILLLIV) traverse the membrane as a helical segment.

Belongs to the ATPase B chain family. In terms of assembly, F-type ATPases have 2 components, F(1) - the catalytic core - and F(0) - the membrane proton channel. F(1) has five subunits: alpha(3), beta(3), gamma(1), delta(1), epsilon(1). F(0) has three main subunits: a(1), b(2) and c(10-14). The alpha and beta chains form an alternating ring which encloses part of the gamma chain. F(1) is attached to F(0) by a central stalk formed by the gamma and epsilon chains, while a peripheral stalk is formed by the delta and b chains.

It localises to the cell membrane. Its function is as follows. F(1)F(0) ATP synthase produces ATP from ADP in the presence of a proton or sodium gradient. F-type ATPases consist of two structural domains, F(1) containing the extramembraneous catalytic core and F(0) containing the membrane proton channel, linked together by a central stalk and a peripheral stalk. During catalysis, ATP synthesis in the catalytic domain of F(1) is coupled via a rotary mechanism of the central stalk subunits to proton translocation. In terms of biological role, component of the F(0) channel, it forms part of the peripheral stalk, linking F(1) to F(0). The protein is ATP synthase subunit b of Clostridium botulinum (strain ATCC 19397 / Type A).